Reading from the N-terminus, the 694-residue chain is Polyribonucleotide nucleotidyltransferase (694 aa).

Mg(2+)-binding residues include Asp485 and Asp491. The KH domain occupies 552-611 (PRIETMQIKPNKIATVIGPGGKQIRQIIEEAGVQIDINDSGLVSISASSPQAIEKAKSII). One can recognise an S1 motif domain in the interval 621–689 (GKIYEGRVTS…EKGQYKLSHK (69 aa)).

This sequence belongs to the polyribonucleotide nucleotidyltransferase family. Mg(2+) is required as a cofactor.

The protein resides in the cytoplasm. The catalysed reaction is RNA(n+1) + phosphate = RNA(n) + a ribonucleoside 5'-diphosphate. In terms of biological role, involved in mRNA degradation. Catalyzes the phosphorolysis of single-stranded polyribonucleotides processively in the 3'- to 5'-direction. The chain is Polyribonucleotide nucleotidyltransferase from Chlamydia abortus (strain DSM 27085 / S26/3) (Chlamydophila abortus).